A 392-amino-acid chain; its full sequence is Peptidoglycan hydrolase PcsB (392 aa).

An N-terminal signal peptide occupies residues 1–27 (MKKKILASLLLSTVMVSQVAVLTTAHA). 2 coiled-coil regions span residues 34 to 96 (IAAQ…LSKN) and 191 to 227 (TKQA…AEAE). Residues 47-267 (QQQEAQKQVD…TAQVQAVSES (221 aa)) are interacts with large extracellular loop of FtsX. One can recognise a Peptidase C51 domain in the interval 267-390 (SAAAPVRAKV…TSEGFVTYIY (124 aa)).

In terms of assembly, homodimer. Interacts (via N-terminal coiled coil domain) with FtsX (via large extracellular loop). This interaction directs PcsB to equatorial and septal sites of dividing cells. Interacts with FtsE.

It is found in the cell membrane. It localises to the cell septum. Its subcellular location is the secreted. Its activity is regulated as follows. Lacks peptidoglycan-hydrolase activity in vitro, probably due to auto-inhibition by the CC domain. In the homodimer, interaction between the CC domain in one monomer and the hydrolase active site in the peptidase C51/CHAP domain in the other monomer probably mediates auto-inhibition of the hydrolase activity. Functionally, peptidoglycan-hydrolase activity. Required in maintaining normal growth and cellular morphology. Involved in splitting of the septum during cell division. The chain is Peptidoglycan hydrolase PcsB from Streptococcus pneumoniae serotype 2 (strain D39 / NCTC 7466).